We begin with the raw amino-acid sequence, 288 residues long: Bifunctional protein FolD (288 aa).

NADP(+) is bound by residues 166-168 (GAS) and isoleucine 232.

Belongs to the tetrahydrofolate dehydrogenase/cyclohydrolase family. Homodimer.

The catalysed reaction is (6R)-5,10-methylene-5,6,7,8-tetrahydrofolate + NADP(+) = (6R)-5,10-methenyltetrahydrofolate + NADPH. The enzyme catalyses (6R)-5,10-methenyltetrahydrofolate + H2O = (6R)-10-formyltetrahydrofolate + H(+). Its pathway is one-carbon metabolism; tetrahydrofolate interconversion. In terms of biological role, catalyzes the oxidation of 5,10-methylenetetrahydrofolate to 5,10-methenyltetrahydrofolate and then the hydrolysis of 5,10-methenyltetrahydrofolate to 10-formyltetrahydrofolate. The protein is Bifunctional protein FolD of Erwinia tasmaniensis (strain DSM 17950 / CFBP 7177 / CIP 109463 / NCPPB 4357 / Et1/99).